The chain runs to 585 residues: Cytoplasmic polyadenylation element-binding protein 1 (585 aa).

Residues 1-32 (MQHQLKACGDVKTSSRAQQNHRRSTAASAKRS) form a disordered region. 2 consecutive RRM domains span residues 251–356 (RKVF…PWRL) and 373–444 (RTVF…HAET). Residues 513-533 (DQTRILPRPPHHPAAHHSHQR) form a disordered region. A compositionally biased stretch (basic residues) spans 521 to 532 (PPHHPAAHHSHQ).

As to quaternary structure, interacts with fbf-1.

Functionally, cytoplasmic polyadenylation element binding protein that binds to and regulates the translation of specific mRNAs. Essential for progression through meiosis. Involved in spermatogenesis. This chain is Cytoplasmic polyadenylation element-binding protein 1 (cpb-1), found in Caenorhabditis briggsae.